The chain runs to 192 residues: Protein GrpE (192 aa).

The segment at 1–34 is disordered; it reads MSSKEQKTPNEQVSEEMENAAEQQVEATQETGEG. Residues 21-31 are compositionally biased toward polar residues; sequence AEQQVEATQET.

It belongs to the GrpE family. Homodimer.

The protein resides in the cytoplasm. Functionally, participates actively in the response to hyperosmotic and heat shock by preventing the aggregation of stress-denatured proteins, in association with DnaK and GrpE. It is the nucleotide exchange factor for DnaK and may function as a thermosensor. Unfolded proteins bind initially to DnaJ; upon interaction with the DnaJ-bound protein, DnaK hydrolyzes its bound ATP, resulting in the formation of a stable complex. GrpE releases ADP from DnaK; ATP binding to DnaK triggers the release of the substrate protein, thus completing the reaction cycle. Several rounds of ATP-dependent interactions between DnaJ, DnaK and GrpE are required for fully efficient folding. This Yersinia enterocolitica serotype O:8 / biotype 1B (strain NCTC 13174 / 8081) protein is Protein GrpE.